Here is a 117-residue protein sequence, read N- to C-terminus: G antigen 5 (117 aa).

The segment at 1 to 117 is disordered; that stretch reads MSWRGRSTYY…PEEGEKQSQC (117 aa). Acidic residues-rich tracts occupy residues 32-45 and 87-96; these read FSDEVEPATPEEGE and ECEDGPDGQE. Over residues 103 to 117 the composition is skewed to basic and acidic residues; the sequence is EEVKTPEEGEKQSQC.

Belongs to the GAGE family. As to expression, expressed in a variety of tumor tissues but not in normal tissues, except testis.

This is G antigen 5 (GAGE5) from Homo sapiens (Human).